The chain runs to 461 residues: L-seryl-tRNA(Sec) selenium transferase (461 aa).

An N6-(pyridoxal phosphate)lysine modification is found at Lys291.

It belongs to the SelA family. Pyridoxal 5'-phosphate serves as cofactor.

Its subcellular location is the cytoplasm. The catalysed reaction is L-seryl-tRNA(Sec) + selenophosphate + H(+) = L-selenocysteinyl-tRNA(Sec) + phosphate. The protein operates within aminoacyl-tRNA biosynthesis; selenocysteinyl-tRNA(Sec) biosynthesis; selenocysteinyl-tRNA(Sec) from L-seryl-tRNA(Sec) (bacterial route): step 1/1. In terms of biological role, converts seryl-tRNA(Sec) to selenocysteinyl-tRNA(Sec) required for selenoprotein biosynthesis. In Caldanaerobacter subterraneus subsp. tengcongensis (strain DSM 15242 / JCM 11007 / NBRC 100824 / MB4) (Thermoanaerobacter tengcongensis), this protein is L-seryl-tRNA(Sec) selenium transferase.